The primary structure comprises 113 residues: Protein TrbJ (113 aa).

The polypeptide is Protein TrbJ (trbJ) (Escherichia coli (strain K12)).